Consider the following 254-residue polypeptide: Hydroxypyruvate/pyruvate aldolase (254 aa).

Residue histidine 47 is the Proton acceptor of the active site. The a divalent metal cation site is built by glutamate 151 and aspartate 177.

It belongs to the HpcH/HpaI aldolase family. It depends on a divalent metal cation as a cofactor.

It catalyses the reaction D-glyceraldehyde + pyruvate = 2-dehydro-3-deoxy-L-galactonate. Its function is as follows. Aldolase which can catalyze in vitro the aldolisation reaction between hydroxypyruvate (HPA) or pyruvate (PA) and D-glyceraldehyde (D-GA). The condensation of pyruvate and D-glyceraldehyde produces 2-dehydro-3-deoxy-L-galactonate as the major product. Has weak activity with hydroxypyruvate and D-glyceraldehyde. This Chromohalobacter salexigens (strain ATCC BAA-138 / DSM 3043 / CIP 106854 / NCIMB 13768 / 1H11) protein is Hydroxypyruvate/pyruvate aldolase.